Consider the following 730-residue polypeptide: Ribosomal RNA large subunit methyltransferase K/L (730 aa).

Residues 46–157 (TAYRLCLWSR…RGEAILSLDL (112 aa)) form the THUMP domain.

Belongs to the methyltransferase superfamily. RlmKL family.

The protein localises to the cytoplasm. The catalysed reaction is guanosine(2445) in 23S rRNA + S-adenosyl-L-methionine = N(2)-methylguanosine(2445) in 23S rRNA + S-adenosyl-L-homocysteine + H(+). It catalyses the reaction guanosine(2069) in 23S rRNA + S-adenosyl-L-methionine = N(2)-methylguanosine(2069) in 23S rRNA + S-adenosyl-L-homocysteine + H(+). In terms of biological role, specifically methylates the guanine in position 2445 (m2G2445) and the guanine in position 2069 (m7G2069) of 23S rRNA. This Pseudomonas putida (strain W619) protein is Ribosomal RNA large subunit methyltransferase K/L.